Here is a 980-residue protein sequence, read N- to C-terminus: Putative leucine-rich repeat receptor-like serine/threonine-protein kinase At2g24130 (980 aa).

A signal peptide spans 1 to 20; that stretch reads MDYCSLLVVSFLITVMTVLA. At 21 to 593 the chain is on the extracellular side; it reads SKENDHELIK…ACKKKHKYPS (573 aa). Asparagine 55 and asparagine 88 each carry an N-linked (GlcNAc...) asparagine glycan. LRR repeat units follow at residues 65–89, 90–113, 115–138, 139–162, 165–189, 191–214, 215–238, and 240–263; these read STQVIELDISGRDLGGEISPSIANL, TGLTVLDLSRNFFVGKIPPEIGSL, ETLKQLSLSENLLHGNIPQELGLL, NRLVYLDLGSNRLNGSIPVQLFCN, SSSLQYIDLSNNSLTGEIPLNYHCH, KELRFLLLWSNKLTGTVPSSLSNS, TNLKWMDLESNMLSGELPSQVISK, and PQLQFLYLSYNHFVSHNNNTNLEP. 4 N-linked (GlcNAc...) asparagine glycosylation sites follow: asparagine 152, asparagine 162, asparagine 175, and asparagine 213. Asparagine 257 and asparagine 270 each carry an N-linked (GlcNAc...) asparagine glycan. LRR repeat units lie at residues 271 to 295, 296 to 320, 322 to 344, 345 to 370, 372 to 391, 392 to 416, 417 to 440, 442 to 463, 464 to 490, 491 to 514, 515 to 537, and 539 to 563; these read SSDLQELELAGNSLGGEITSSVRHL, SVNLVQIHLDQNRIHGSIPPEISNL, NLTLLNLSSNLLSGPIPRELCKL, SKLERVYLSNNHLTGEIPMELGDIPR, GLLDVSRNNLSGSIPDSFGN, LSQLRRLLLYGNHLSGTVPQSLGKC, INLEILDLSHNNLTGTIPVEVVSN, RNLKLYLNLSSNHLSGPIPLEL, SKMDMVLSVDLSSNELSGKIPPQLGSC, IALEHLNLSRNGFSSTLPSSLGQL, PYLKELDVSFNRLTGAIPPSFQQ, and STLKHLNFSFNLLSGNVSDKGSFSK. Residues asparagine 322 and asparagine 327 are each glycosylated (N-linked (GlcNAc...) asparagine). Residues asparagine 380 and asparagine 391 are each glycosylated (N-linked (GlcNAc...) asparagine). Residues asparagine 428 and asparagine 449 are each glycosylated (N-linked (GlcNAc...) asparagine). Asparagine 497 is a glycosylation site (N-linked (GlcNAc...) asparagine). N-linked (GlcNAc...) asparagine glycosylation is found at asparagine 545 and asparagine 554. Residues 594–614 traverse the membrane as a helical segment; sequence VLLPVLLSLIATPVLCVFGYP. The Cytoplasmic segment spans residues 615-980; the sequence is LVQRSRFGKN…SQETQGEASS (366 aa). A Phosphothreonine modification is found at threonine 658. One can recognise a Protein kinase domain in the interval 661 to 960; that stretch reads FNASSLIGSG…HEMGRLKEYL (300 aa). ATP contacts are provided by residues 667 to 675 and lysine 689; that span reads IGSGRFGHV. Residue tyrosine 775 is modified to Phosphotyrosine. Aspartate 788 serves as the catalytic Proton acceptor. Residue tyrosine 841 is modified to Phosphotyrosine.

This sequence belongs to the protein kinase superfamily. Ser/Thr protein kinase family.

It is found in the cell membrane. The enzyme catalyses L-seryl-[protein] + ATP = O-phospho-L-seryl-[protein] + ADP + H(+). It carries out the reaction L-threonyl-[protein] + ATP = O-phospho-L-threonyl-[protein] + ADP + H(+). The chain is Putative leucine-rich repeat receptor-like serine/threonine-protein kinase At2g24130 from Arabidopsis thaliana (Mouse-ear cress).